Consider the following 371-residue polypeptide: Cuticle collagen 71 (371 aa).

Residues 38 to 60 form a helical membrane-spanning segment; it reads GYAAVTFSTVSVICFCVTMPVVF. Disordered stretches follow at residues 108–127 and 153–371; these read AGYD…GGDA and EGPH…GTRR. The segment covering 174 to 186 has biased composition (pro residues); it reads PGPPGPPGPPGRP. Residues 188 to 201 show a composition bias toward low complexity; that stretch reads PNGKAGANGLNGNP. Pro residues predominate over residues 202-222; it reads GRPPEAPCEPVTPPPCPPCPA. Low complexity predominate over residues 223–240; sequence GPKGAPGQAGYPGADGQP. The Collagen-like domain occupies 223 to 280; sequence GPKGAPGQAGYPGADGQPGSQGDNGEKGSDGAAGEKGRPGPLGKIGEPGATGETGENA. The segment covering 246–260 has biased composition (basic and acidic residues); it reads NGEKGSDGAAGEKGR. Residues 314–323 are compositionally biased toward low complexity; it reads AGAPGAPGEN. Residues 340-349 are compositionally biased toward basic and acidic residues; the sequence is HDGKAGRAGE.

This sequence belongs to the cuticular collagen family. Collagen polypeptide chains are complexed within the cuticle by disulfide bonds and other types of covalent cross-links.

It is found in the membrane. Its subcellular location is the nucleus. Probable cuticular collagen-like protein. Nematode cuticles are composed largely of collagen-like proteins. The cuticle functions both as an exoskeleton and as a barrier to protect the worm from its environment. Acts downstream of the Wnt signaling pathway, perhaps in the formation of the adult cuticle. The sequence is that of Cuticle collagen 71 from Caenorhabditis elegans.